A 230-amino-acid polypeptide reads, in one-letter code: 2,3-bisphosphoglycerate-dependent phosphoglycerate mutase (230 aa).

Substrate is bound by residues 8 to 15 (RHGESEWN), 21 to 22 (TG), R60, 87 to 90 (ERHY), K98, 114 to 115 (RR), and 183 to 184 (GN). The active-site Tele-phosphohistidine intermediate is the H9. E87 serves as the catalytic Proton donor/acceptor.

The protein belongs to the phosphoglycerate mutase family. BPG-dependent PGAM subfamily.

It carries out the reaction (2R)-2-phosphoglycerate = (2R)-3-phosphoglycerate. The protein operates within carbohydrate degradation; glycolysis; pyruvate from D-glyceraldehyde 3-phosphate: step 3/5. Functionally, catalyzes the interconversion of 2-phosphoglycerate and 3-phosphoglycerate. The polypeptide is 2,3-bisphosphoglycerate-dependent phosphoglycerate mutase (Streptococcus thermophilus (strain CNRZ 1066)).